The following is a 303-amino-acid chain: Counting factor 50 (303 aa).

An N-terminal signal peptide occupies residues 1–24 (MNKMNNIFLIISSIILSIVIFVSG). Positions 28–240 (IDFSSEISVG…CSTSSGSASG (213 aa)) constitute a Ch-type lysozyme domain. Residue Asn-67 is glycosylated (N-linked (GlcNAc...) asparagine). Glu-125 is a catalytic residue. Asn-170 carries N-linked (GlcNAc...) asparagine glycosylation. The S-G-S motif repeats stretch occupies residues 226–303 (GSGSGCSTSS…GSGTGSGSSI (78 aa)). The span at 236–292 (GSASGSASGSASGSASGSNSGSSNSGSSNSGSSNSGSNSGSSNSGSGNSGSSNSGSA) shows a compositional bias: low complexity. Residues 236–303 (GSASGSASGS…GSGTGSGSSI (68 aa)) form a disordered region. Residues 293–303 (SGSGTGSGSSI) show a composition bias toward gly residues.

It belongs to the glycosyl hydrolase 25 family. In terms of assembly, monomer. Component of the counting factor (CF) complex, which includes cf60, cf50, cf45-1 and ctnA.

It is found in the secreted. It carries out the reaction Hydrolysis of (1-&gt;4)-beta-linkages between N-acetylmuramic acid and N-acetyl-D-glucosamine residues in a peptidoglycan and between N-acetyl-D-glucosamine residues in chitodextrins.. Functionally, cell-counting factor that limits the maximum size of the multicellular structure during aggregation. Has a very low lysozyme activity. This is Counting factor 50 (cf50-1) from Dictyostelium discoideum (Social amoeba).